Reading from the N-terminus, the 514-residue chain is 2,3-bisphosphoglycerate-independent phosphoglycerate mutase (514 aa).

D14 and S64 together coordinate Mn(2+). Catalysis depends on S64, which acts as the Phosphoserine intermediate. Residues H125, 155 to 156 (RD), R187, R193, 263 to 266 (RADR), and K337 contribute to the substrate site. Mn(2+) is bound by residues D404, H408, D445, H446, and H463.

Belongs to the BPG-independent phosphoglycerate mutase family. In terms of assembly, monomer. Mn(2+) serves as cofactor.

The enzyme catalyses (2R)-2-phosphoglycerate = (2R)-3-phosphoglycerate. Its pathway is carbohydrate degradation; glycolysis; pyruvate from D-glyceraldehyde 3-phosphate: step 3/5. Functionally, catalyzes the interconversion of 2-phosphoglycerate and 3-phosphoglycerate. This Hahella chejuensis (strain KCTC 2396) protein is 2,3-bisphosphoglycerate-independent phosphoglycerate mutase.